Consider the following 879-residue polypeptide: MNEQYSAMRSNVSMLGKLLGDTIKEALGENILDKVETIRKLSKSSRAGNEKHRQELLTTLQNLSNDELLPVARAFSQFLNLTNTAEQYHTISPHGEAASNPAQLSSAFERLKESKDLTERDIRDAVESLSIELVLTAHPTEITRRTLIHKLVEVNTCLKQLDHNDLADYERNQIMRRLRQLIAQSWHTDEIRKIRPTPVDEAKWGFAVVENSLWEGVPAFLRELDEQLEQAFGYRLPVDAVPVRFTSWMGGDRDGNPNVTAEVTRHVLLLSRWKAADLFLRDIQVLVSELSMSECTPELLELAGGSEVQEPYRAIMKSLRSQLSSTLSYLEARLTGEERLPPKDLLITNEQLWEPLHACYQSLKSCGMGIIADGRLLDTLRRVRCFGVPLVRIDVRQESTRHTEALAEITRYLGLGDYESWSESDKQAFLIRELSSKRPLLPRYWEPSADTKEVLDTCRVIAKAPQGSIAAYVISMARTPSDVLAVHLLLKEAGCSFALPVAPLFETLDDLNNADDVMTQLLSIDWYRGFIQGKQMVMIGYSDSAKDAGVMAASWAQYRAQDALIKTCEKAGIALTLFHGRGGSIGRGGAPAHAALLSQPPGSLKGGLRVTEQGEMIRFKYGLPEVTISSLALYTGAILEANLLPPPEPKQEWHEVMDELSRVSCDMYRGYVRENPDFVPYFRAATPELELGKLPLGSRPAKRRPNGGVESLRAIPWIFAWTQNRLMLPAWLGAGAALQKVVDDGKQEQLEEMCRDWPFFSTRIGMLEMVFAKADLWLAEYYDQRLVDEKLWPLGKQLRDQLAADINIVLAISNDDHLMADLPWIAESIALRNVYTDPLNVLQAELLHRSRQQEKPDADLELALMVTIAGVAAGMRNTG.

Residues His-138 and Lys-546 contribute to the active site.

This sequence belongs to the PEPCase type 1 family. Mg(2+) is required as a cofactor.

It carries out the reaction oxaloacetate + phosphate = phosphoenolpyruvate + hydrogencarbonate. Forms oxaloacetate, a four-carbon dicarboxylic acid source for the tricarboxylic acid cycle. In Pectobacterium carotovorum subsp. carotovorum (strain PC1), this protein is Phosphoenolpyruvate carboxylase.